A 147-amino-acid chain; its full sequence is MFDGIGFMELLLIGVLGLVVLGPERLPVAVRSVTGWIRAMKRMANSVKEELEQELKIEQLHADLKKAESKGLSNLSPELQESIDQLKQAAQSVNRPYQVQDIPAQENQIHNPASQSVSSEASPTASSAPTSEPNQGEDTRSNPKANG.

The chain crosses the membrane as a helical span at residues 2 to 22 (FDGIGFMELLLIGVLGLVVLG). Residues 68-147 (ESKGLSNLSP…DTRSNPKANG (80 aa)) are disordered. Positions 71–97 (GLSNLSPELQESIDQLKQAAQSVNRPY) are enriched in polar residues. Positions 112 to 133 (PASQSVSSEASPTASSAPTSEP) are enriched in low complexity.

It belongs to the TatB family. In terms of assembly, the Tat system comprises two distinct complexes: a TatABC complex, containing multiple copies of TatA, TatB and TatC subunits, and a separate TatA complex, containing only TatA subunits. Substrates initially bind to the TatABC complex, which probably triggers association of the separate TatA complex to form the active translocon.

Its subcellular location is the cell inner membrane. Part of the twin-arginine translocation (Tat) system that transports large folded proteins containing a characteristic twin-arginine motif in their signal peptide across membranes. Together with TatC, TatB is part of a receptor directly interacting with Tat signal peptides. TatB may form an oligomeric binding site that transiently accommodates folded Tat precursor proteins before their translocation. This is Sec-independent protein translocase protein TatB from Shewanella sp. (strain MR-4).